A 385-amino-acid chain; its full sequence is MELNSEDVLVARYGELVLKGKNRSYFTKQLKINIKKAFKKLEINNSIVYEFDRIVVFDIKKEQRAILQELFSFLPGISLFFFASQIVREENKLLDLLFNLFKDFNSFKLEVKRRDKNFAENSSNFKKYLAVKLFEKYQLKGVINNPEIIANIEILKEHFLVFTERFKGKGGLPVYSSGKALVLLSGGIDSPVAASLVMQRGFNIDFITFINEPNKNQKTIEKITRLANLISFNKTICSGKLLVFDFTAIQKELIHISNESYRIVLMRRVFYKAASMFKYDCLVTGEVLGQVASQTIENLKVIQSATPDTFIVRPLIGFSKDKIIELAKFFNTFDISIEQHLDTCSEFSPKNPTTKAKLINVEKLESELIFLNDLIEKGVSELSND.

The THUMP domain maps to 65 to 165 (AILQELFSFL…KEHFLVFTER (101 aa)). ATP contacts are provided by residues 183–184 (LL), 208–209 (TF), Arg267, Gly285, and Gln294.

Belongs to the ThiI family.

It is found in the cytoplasm. It carries out the reaction [ThiI sulfur-carrier protein]-S-sulfanyl-L-cysteine + a uridine in tRNA + 2 reduced [2Fe-2S]-[ferredoxin] + ATP + H(+) = [ThiI sulfur-carrier protein]-L-cysteine + a 4-thiouridine in tRNA + 2 oxidized [2Fe-2S]-[ferredoxin] + AMP + diphosphate. It catalyses the reaction [ThiS sulfur-carrier protein]-C-terminal Gly-Gly-AMP + S-sulfanyl-L-cysteinyl-[cysteine desulfurase] + AH2 = [ThiS sulfur-carrier protein]-C-terminal-Gly-aminoethanethioate + L-cysteinyl-[cysteine desulfurase] + A + AMP + 2 H(+). The protein operates within cofactor biosynthesis; thiamine diphosphate biosynthesis. Its function is as follows. Catalyzes the ATP-dependent transfer of a sulfur to tRNA to produce 4-thiouridine in position 8 of tRNAs, which functions as a near-UV photosensor. Also catalyzes the transfer of sulfur to the sulfur carrier protein ThiS, forming ThiS-thiocarboxylate. This is a step in the synthesis of thiazole, in the thiamine biosynthesis pathway. The sulfur is donated as persulfide by IscS. In Mycoplasma genitalium (strain ATCC 33530 / DSM 19775 / NCTC 10195 / G37) (Mycoplasmoides genitalium), this protein is Probable tRNA sulfurtransferase.